The sequence spans 389 residues: 8-amino-7-oxononanoate synthase (389 aa).

Arg19 serves as a coordination point for substrate. Pyridoxal 5'-phosphate is bound at residue 106–107 (GY). Residue His131 coordinates substrate. Ser176, His204, and Thr233 together coordinate pyridoxal 5'-phosphate. Lys236 bears the N6-(pyridoxal phosphate)lysine mark. Thr350 is a binding site for substrate.

Belongs to the class-II pyridoxal-phosphate-dependent aminotransferase family. BioF subfamily. As to quaternary structure, homodimer. The cofactor is pyridoxal 5'-phosphate.

It catalyses the reaction 6-carboxyhexanoyl-[ACP] + L-alanine + H(+) = (8S)-8-amino-7-oxononanoate + holo-[ACP] + CO2. It participates in cofactor biosynthesis; biotin biosynthesis. Functionally, catalyzes the decarboxylative condensation of pimeloyl-[acyl-carrier protein] and L-alanine to produce 8-amino-7-oxononanoate (AON), [acyl-carrier protein], and carbon dioxide. This is 8-amino-7-oxononanoate synthase from Ectopseudomonas mendocina (strain ymp) (Pseudomonas mendocina).